A 440-amino-acid chain; its full sequence is GTPase Der (440 aa).

2 EngA-type G domains span residues 4–168 (PIVA…PENK) and 177–352 (IKVA…NQRA). Residues 10-17 (GRPNVGKS), 57-61 (DTGGI), 120-123 (NKVD), 183-190 (GKPNVGKS), 230-234 (DTAGL), and 295-298 (NKWD) contribute to the GTP site. Residues 353–437 (MRVPTGGLNE…PIRFIYREKS (85 aa)) enclose the KH-like domain.

Belongs to the TRAFAC class TrmE-Era-EngA-EngB-Septin-like GTPase superfamily. EngA (Der) GTPase family. As to quaternary structure, associates with the 50S ribosomal subunit.

Functionally, GTPase that plays an essential role in the late steps of ribosome biogenesis. The protein is GTPase Der of Alkaliphilus metalliredigens (strain QYMF).